The sequence spans 210 residues: Ribosomal RNA small subunit methyltransferase G (210 aa).

Residues glycine 76, methionine 81, 127–128 (VE), and arginine 145 each bind S-adenosyl-L-methionine.

The protein belongs to the methyltransferase superfamily. RNA methyltransferase RsmG family.

It localises to the cytoplasm. It catalyses the reaction guanosine(527) in 16S rRNA + S-adenosyl-L-methionine = N(7)-methylguanosine(527) in 16S rRNA + S-adenosyl-L-homocysteine. In terms of biological role, specifically methylates the N7 position of guanine in position 527 of 16S rRNA. This Acinetobacter baumannii (strain AB307-0294) protein is Ribosomal RNA small subunit methyltransferase G.